We begin with the raw amino-acid sequence, 613 residues long: UBX domain-containing protein 3 (613 aa).

Disordered regions lie at residues 67-223 (PAAA…PINP) and 453-472 (MNEQ…RNQQ). Low complexity predominate over residues 68–82 (AAASGRNAGASSSSR). A compositionally biased stretch (basic residues) spans 137-149 (THHRGAAIPRQKR). A compositionally biased stretch (low complexity) spans 158-169 (SSSGSSSASFSS). Positions 452 to 517 (RMNEQSERRE…EEEECVRRQT (66 aa)) form a coiled coil. Positions 531-610 (PLAEIINVKF…KWPAREQIFV (80 aa)) constitute a UBX domain. An Interaction with cdc-48 motif is present at residues 582–584 (FPK).

Forms a complex composed of ubxn-3, cdc-48.1, ufd-1 and npl-4.1. Forms a complex composed of ubxn-3, cdc-48.1 and/or cdc-48.2 and substrate cdt-1. Interacts (via FPK motif) with cdc-48.1 (via N-terminus) and cdc-48.2 (via N-terminus). Interacts (via N-terminus) with cdt-1 and ubiquitinated protein substrates; the interaction is cdc-48-independent. May interact with npl-4.1. As to expression, expressed in the germline (at protein level). Expressed in spermatocytes but not in mature sperm (at protein level). Expressed in the spermatheca and nerve cells.

It is found in the nucleus. It localises to the cytoplasm. The protein resides in the perinuclear region. The protein localises to the chromosome. Ubiquitin-binding protein which acts as an adapter for ATPase cdc-48.1 and/or cdc-48.2, conferring substrate specificity. Together with ubxn-1 and ubxn-2, plays a role in hermaphrodite spermatogenesis probably by promoting the degradation of sex determination terminal factor tra-1. During mitosis, ensures the degradation of DNA licensing factor cdt-1 and the disassembly of the DNA replication CMG helicase complex by promoting the dissociation from chromatin of several of its components including cdc-45 and sld-5. This is UBX domain-containing protein 3 from Caenorhabditis elegans.